A 163-amino-acid polypeptide reads, in one-letter code: Type II secretion system protein M (163 aa).

The Cytoplasmic segment spans residues 1-19 (MMDKLQGWWRSISAREQRL). A helical transmembrane segment spans residues 20 to 40 (VAVGGSCLLIGFCYWIVWQPI). The Periplasmic segment spans residues 41–163 (ANRIAERERQ…VRRLQLSRPQ (123 aa)).

It belongs to the GSP M family. As to quaternary structure, type II secretion system is composed of four main components: the outer membrane complex, the inner membrane complex, the cytoplasmic secretion ATPase and the periplasm-spanning pseudopilus. Forms homodimers. Interacts with ExeL/GspL. Interacts with ExeE/GspE and ExeF/GspF.

The protein resides in the cell inner membrane. Its function is as follows. Inner membrane component of the type II secretion system required for the energy-dependent secretion of extracellular factors such as proteases and toxins from the periplasm. Plays a role in the complex assembly and recruits ExeL resulting in a stable complex in the inner membrane. Provides thus a link between the energy-providing ExeE protein in the cytoplasm and the rest of the T2SS machinery. The protein is Type II secretion system protein M (exeM) of Aeromonas hydrophila.